Here is a 427-residue protein sequence, read N- to C-terminus: MSIYAVIGTQWGDEGKGKIIDFLSSKIDYVVRFNGGNNAGHTIVVNNKKFIFNLLPSGVLQGAKCILGPGVVIDPLILIKELEALKHNNIKTEIFISDKAHIIMPYHIKLDELNEQKKGVYKIGTTKRGIGPCYADKINRTGIRAVDLLDIKIFERKLKINLDEKNEIIEKIYNHKPFNYDDILSKYKKCIAILQYAITNTEEILNQAINSGKIILIEGAQGTMLDIEHGTFPFVTSSNTLITATTGCGIPISKIKEKIGIVKAFSSRVGSGPFVTEILGPIGDKIREKGQEYGSTTNRPRRIGWLDLLTIKKSISLNELNHLALTKLDILNNIEDLKICTAYEFKGKIYDYIPTSCEILENVKPVYKVFKGFKQNIRNISHYEDLPIEAKEYIEFIEREVGVQISILSLGAEREKTIFRNQKWINI.

GTP is bound by residues 12–18 (GDEGKGK) and 40–42 (GHT). D13 serves as the catalytic Proton acceptor. D13 and G40 together coordinate Mg(2+). IMP-binding positions include 13–16 (DEGK), 38–41 (NAGH), T126, R140, Q221, T236, and R299. The active-site Proton donor is the H41. 295 to 301 (STTNRPR) is a substrate binding site. GTP-binding positions include R301, 327-329 (KLD), and 409-411 (SLG).

This sequence belongs to the adenylosuccinate synthetase family. Homodimer. The cofactor is Mg(2+).

The protein resides in the cytoplasm. It catalyses the reaction IMP + L-aspartate + GTP = N(6)-(1,2-dicarboxyethyl)-AMP + GDP + phosphate + 2 H(+). It participates in purine metabolism; AMP biosynthesis via de novo pathway; AMP from IMP: step 1/2. Functionally, plays an important role in the de novo pathway of purine nucleotide biosynthesis. Catalyzes the first committed step in the biosynthesis of AMP from IMP. The chain is Adenylosuccinate synthetase from Borrelia turicatae (strain 91E135).